Here is a 404-residue protein sequence, read N- to C-terminus: Argininosuccinate synthase (404 aa).

9–17 is a binding site for ATP; that stretch reads AYSGGLDTS. Tyr-86 contacts L-citrulline. Residue Gly-116 coordinates ATP. L-aspartate-binding residues include Thr-118, Asn-122, and Asp-123. L-citrulline is bound at residue Asn-122. Residues Arg-126, Ser-174, Ser-183, Glu-259, and Tyr-271 each contribute to the L-citrulline site.

Belongs to the argininosuccinate synthase family. Type 1 subfamily. Homotetramer.

It localises to the cytoplasm. The catalysed reaction is L-citrulline + L-aspartate + ATP = 2-(N(omega)-L-arginino)succinate + AMP + diphosphate + H(+). The protein operates within amino-acid biosynthesis; L-arginine biosynthesis; L-arginine from L-ornithine and carbamoyl phosphate: step 2/3. This chain is Argininosuccinate synthase, found in Listeria monocytogenes serotype 4b (strain CLIP80459).